The primary structure comprises 2166 residues: Protein TIC236, chloroplastic (2166 aa).

A chloroplast-targeting transit peptide spans 1-37 (MSLRLQNPFLSTPLLHGSFNRREKRINVARRAFRSKR). Residues 38-101 (IYSEKKQNDW…RSLAPVWEEG (64 aa)) are Stromal-facing. A helical transmembrane segment spans residues 102-122 (LFFLRCSVFFAVISGVCLLVW). At 123–2166 (YGQNKARVFV…LFEYSATSQD (2044 aa)) the chain is on the chloroplast intermembrane side. The interval 1611 to 1649 (MSEGEVSETDRGGAVKIPSWAKEKEDDEKRTSRDRSEER) is disordered. The span at 1631 to 1649 (AKEKEDDEKRTSRDRSEER) shows a compositional bias: basic and acidic residues.

The protein belongs to the TamB family. Part of the TIC complex, which can interact with components of the TOC complex to form a larger import complex. Interacts with the TOC complex component TOC75-3.

The protein resides in the plastid. It is found in the chloroplast inner membrane. Its subcellular location is the chloroplast intermembrane space. Functionally, part of the inner chloroplast membrane translocon complex (TIC) which associates with the outer chloroplast membrane translocon complex (TOC) and forms a supercomplex involved in protein precursor import into the chloroplast stroma. Required for the import of HSP93, TIC40 and RBCS protein precursors in the chloroplast stroma. Links the outer and inner membrane translocons of the chloroplast envelope. This is Protein TIC236, chloroplastic from Arabidopsis thaliana (Mouse-ear cress).